A 506-amino-acid chain; its full sequence is Steroid (22S)-hydroxylase (506 aa).

A helical membrane pass occupies residues 12 to 32; sequence LLFFLPFILLALLTFYTTTVA. Cys-449 lines the heme pocket.

Belongs to the cytochrome P450 family. The cofactor is heme.

It is found in the membrane. It carries out the reaction a C28-steroid + reduced [NADPH--hemoprotein reductase] + O2 = a (22S)-22-hydroxy C28-steroid + oxidized [NADPH--hemoprotein reductase] + H2O + H(+). It catalyses the reaction campesterol + reduced [NADPH--hemoprotein reductase] + O2 = (22S)-22-hydroxycampesterol + oxidized [NADPH--hemoprotein reductase] + H2O + H(+). The enzyme catalyses campestanol + reduced [NADPH--hemoprotein reductase] + O2 = 6-deoxycathasterone + oxidized [NADPH--hemoprotein reductase] + H2O + H(+). The protein operates within plant hormone biosynthesis; brassinosteroid biosynthesis. Catalyzes the C22-alpha-hydroxylation step in brassinosteroid biosynthesis, which is the rate-limiting step in this biosynthetic pathway. Catalyzes the conversion of campesterol (CR) to (22S)-22-hydroxycampesterol (22-OHCR, 22-hydroxyCR) and of campestanol (CN) to 6-deoxocathasterone (6-deoxoCT). This is Steroid (22S)-hydroxylase from Oryza sativa subsp. indica (Rice).